We begin with the raw amino-acid sequence, 207 residues long: Guanylate kinase (207 aa).

The region spanning 4–184 (GTLYIVSAPS…ALMDFKAIIR (181 aa)) is the Guanylate kinase-like domain. 11-18 (APSGAGKS) contacts ATP.

This sequence belongs to the guanylate kinase family.

It is found in the cytoplasm. The enzyme catalyses GMP + ATP = GDP + ADP. Functionally, essential for recycling GMP and indirectly, cGMP. In Vibrio vulnificus (strain CMCP6), this protein is Guanylate kinase.